The sequence spans 83 residues: Hepcidin (83 aa).

The N-terminal stretch at 1–23 is a signal peptide; the sequence is MALSTRTQAACLLLLLLASLSST. A propeptide spanning residues 24–53 is cleaved from the precursor; that stretch reads TYLHQQMRQTTELQPLHGEESRADIAIPMQ. 4 disulfides stabilise this stretch: cysteine 65/cysteine 81, cysteine 68/cysteine 71, cysteine 69/cysteine 77, and cysteine 72/cysteine 80.

This sequence belongs to the hepcidin family. In terms of assembly, interacts with SLC40A1; this interaction promotes SLC40A1 rapid ubiquitination. Highly expressed in the liver and to a much lesser extent in the heart. Secreted in blood.

It localises to the secreted. Functionally, liver-produced hormone that constitutes the main circulating regulator of iron absorption and distribution across tissues. Acts by promoting endocytosis and degradation of SLC40A1, leading to the retention of iron in iron-exporting cells and decreased flow of iron into plasma. Controls the major flows of iron into plasma: absorption of dietary iron in the intestine, recycling of iron by macrophages, which phagocytose old erythrocytes and other cells, and mobilization of stored iron from hepatocytes. The chain is Hepcidin (Hamp) from Mus musculus (Mouse).